Consider the following 604-residue polypeptide: Aspartate--tRNA(Asp/Asn) ligase (604 aa).

Glutamate 187 contributes to the L-aspartate binding site. Residues 211–214 are aspartate; that stretch reads QQFK. Residues arginine 233 and histidine 461 each contribute to the L-aspartate site. Residue 233–235 participates in ATP binding; that stretch reads RDE. Glutamate 495 contacts ATP. An L-aspartate-binding site is contributed by arginine 502. 547 to 550 contacts ATP; sequence GLDR.

The protein belongs to the class-II aminoacyl-tRNA synthetase family. Type 1 subfamily. Homodimer.

Its subcellular location is the cytoplasm. The catalysed reaction is tRNA(Asx) + L-aspartate + ATP = L-aspartyl-tRNA(Asx) + AMP + diphosphate. Its function is as follows. Aspartyl-tRNA synthetase with relaxed tRNA specificity since it is able to aspartylate not only its cognate tRNA(Asp) but also tRNA(Asn). Reaction proceeds in two steps: L-aspartate is first activated by ATP to form Asp-AMP and then transferred to the acceptor end of tRNA(Asp/Asn). In Chlorobium luteolum (strain DSM 273 / BCRC 81028 / 2530) (Pelodictyon luteolum), this protein is Aspartate--tRNA(Asp/Asn) ligase.